We begin with the raw amino-acid sequence, 81 residues long: uncharacterized protein (81 aa).

This is an uncharacterized protein from Mycoplasma (Bacteriophage L2).